We begin with the raw amino-acid sequence, 158 residues long: MSFRGKRMKNVANQRYYLVREDVLTDAMQKTLEAKHLLSSGSVSSIWDAVKQVDLSRSAFYKYRDAVFPFHSIVQERILTVFLQLQDRKGTLAKLLETVTITHCNVLTIHQTIPIQGRANVTLSLDVTSMTCDLDDLIQQLKRLDFVESAEVISSGAL.

One can recognise an ACT domain in the interval 80-155 (TVFLQLQDRK…FVESAEVISS (76 aa)).

It belongs to the UPF0735 family.

This chain is UPF0735 ACT domain-containing protein Bsph_3944, found in Lysinibacillus sphaericus (strain C3-41).